A 311-amino-acid polypeptide reads, in one-letter code: tRNA dimethylallyltransferase (311 aa).

Position 11–18 (11–18) interacts with ATP; sequence GPTAVGKT. Residue 13-18 participates in substrate binding; it reads TAVGKT. The interaction with substrate tRNA stretch occupies residues 36–39; sequence DSVQ.

It belongs to the IPP transferase family. As to quaternary structure, monomer. The cofactor is Mg(2+).

It catalyses the reaction adenosine(37) in tRNA + dimethylallyl diphosphate = N(6)-dimethylallyladenosine(37) in tRNA + diphosphate. In terms of biological role, catalyzes the transfer of a dimethylallyl group onto the adenine at position 37 in tRNAs that read codons beginning with uridine, leading to the formation of N6-(dimethylallyl)adenosine (i(6)A). The protein is tRNA dimethylallyltransferase of Exiguobacterium sp. (strain ATCC BAA-1283 / AT1b).